A 98-amino-acid chain; its full sequence is Integration host factor subunit alpha (98 aa).

A compositionally biased stretch (basic and acidic residues) spans 53-69; that stretch reads DLREKNERPGRNPKTGE. The interval 53–72 is disordered; sequence DLREKNERPGRNPKTGEDIP.

The protein belongs to the bacterial histone-like protein family. As to quaternary structure, heterodimer of an alpha and a beta chain.

In terms of biological role, this protein is one of the two subunits of integration host factor, a specific DNA-binding protein that functions in genetic recombination as well as in transcriptional and translational control. This chain is Integration host factor subunit alpha, found in Vibrio atlanticus (strain LGP32) (Vibrio splendidus (strain Mel32)).